The primary structure comprises 682 residues: Methionine--tRNA ligase (682 aa).

A 'HIGH' region motif is present at residues 14–24; it reads PYANGSIHLGH. Residues C145, C148, C158, and C161 each coordinate Zn(2+). The 'KMSKS' region signature appears at 331–335; it reads KMSKS. Residue K334 coordinates ATP. One can recognise a tRNA-binding domain in the interval 580–682; sequence AFAAIDLRVA…SGARPGQRIK (103 aa).

The protein belongs to the class-I aminoacyl-tRNA synthetase family. MetG type 1 subfamily. In terms of assembly, homodimer. Zn(2+) serves as cofactor.

It is found in the cytoplasm. The enzyme catalyses tRNA(Met) + L-methionine + ATP = L-methionyl-tRNA(Met) + AMP + diphosphate. In terms of biological role, is required not only for elongation of protein synthesis but also for the initiation of all mRNA translation through initiator tRNA(fMet) aminoacylation. The chain is Methionine--tRNA ligase from Pseudomonas syringae pv. syringae (strain B728a).